The sequence spans 2227 residues: Genome polyprotein (2227 aa).

2 consecutive short sequence motifs ((L)YPX(n)L motif) follow at residues 167 to 171 and 200 to 205; these read YPHGL and YPVWEL. Positions 766–836 are involved in P1-2A pentamerization; the sequence is MMSRIAAGDL…PRKMKGLFSQ (71 aa). A helical membrane pass occupies residues 1011–1031; that stretch reads TVEIINTVLCFVKSGILLYVI. The membrane-penetrating ability stretch occupies residues 1043 to 1070; that stretch reads IGLLRVMNYADIGCSVISCGKVFSKMLE. A coiled-coil region spans residues 1127–1152; the sequence is KKKDILNILKDNQQKIEKAIEEADNF. The 163-residue stretch at 1204–1366 folds into the SF3 helicase domain; the sequence is HQKLKNLGSI…SFFKNPHNDM (163 aa). 1230–1237 is a binding site for ATP; it reads GKRGGGKS. Residues 1462-1482 form a helical membrane-spanning segment; sequence WVAVGAAVGILGVLVGGWFVY. Y1499 carries the post-translational modification O-(5'-phospho-RNA)-tyrosine. The 215-residue stretch at 1514–1728 folds into the Peptidase C3 domain; the sequence is DPVESQSTLE…VAKLVTQEMF (215 aa). Active-site for protease 3C activity residues include H1563, D1603, and C1691. The region spanning 1976-2097 is the RdRp catalytic domain; that stretch reads DVGLDLDFSA…VFSRDVQIDN (122 aa).

This sequence belongs to the picornaviridae polyprotein family. As to quaternary structure, homodimer. Homomultimer; probably interacts with membranes in a multimeric form. Seems to assemble into amyloid-like fibers. In terms of assembly, homodimer. Monomer. Interacts with protein 3CD. Interacts with host ACBD3. As to quaternary structure, interacts with protein 3AB. In terms of assembly, interacts with human MAVS. Homodimer; disulfide-linked. As to quaternary structure, homopentamer. Homooligomer. In terms of assembly, interacts with capsid protein VP2. Interacts with capsid protein VP3. Interacts with capsid protein VP1. Interacts with capsid protein VP3. As to quaternary structure, interacts with capsid protein VP1. Interacts with capsid protein VP2. Post-translationally, specific enzymatic cleavages by viral protease in vivo yield a variety of precursors and mature proteins. Polyprotein processing intermediates are produced, such as P1-2A which is a functional precursor of the structural proteins, VP0 which is a VP4-VP2 precursor, VP1-2A precursor, 3ABC precursor which is a stable and catalytically active precursor of 3A, 3B and 3C proteins, 3AB and 3CD precursors. The assembly signal 2A is removed from VP1-2A by a host protease, possibly host Cathepsin L. This cleavage occurs over a region of 3 amino-acids probably generating VP1 proteins with heterogeneous C-termini. In terms of processing, during virion maturation, immature virions are rendered infectious following cleavage of VP0 into VP4 and VP2. This maturation seems to be an autocatalytic event triggered by the presence of RNA in the capsid and is followed by a conformational change of the particle. The assembly signal 2A is removed from VP1-2A by a host protease, possibly host Cathepsin L in naked virions. This cleavage does not occur in enveloped virions. This cleavage occurs over a region of 3 amino-acids probably generating VP1 proteins with heterogeneous C-termini. Post-translationally, VPg is uridylylated prior to priming replication into VPg-pUpU. In terms of processing, unlike other picornaviruses, does not seem to be myristoylated.

Its subcellular location is the virion. The protein localises to the host endosome. It is found in the host multivesicular body. The protein resides in the host membrane. It localises to the host mitochondrion outer membrane. Its subcellular location is the host cytoplasm. The protein localises to the host cytoplasmic vesicle membrane. The enzyme catalyses RNA(n) + a ribonucleoside 5'-triphosphate = RNA(n+1) + diphosphate. It carries out the reaction a ribonucleoside 5'-triphosphate + H2O = a ribonucleoside 5'-diphosphate + phosphate + H(+). It catalyses the reaction Selective cleavage of Gln-|-Gly bond in the poliovirus polyprotein. In other picornavirus reactions Glu may be substituted for Gln, and Ser or Thr for Gly.. Capsid proteins VP1, VP2, and VP3 form a closed capsid enclosing the viral positive strand RNA genome. All these proteins contain a beta-sheet structure called beta-barrel jelly roll. Together they form an icosahedral capsid (T=3) composed of 60 copies of each VP1, VP2, and VP3, with a diameter of approximately 300 Angstroms. VP1 is situated at the 12 fivefold axes, whereas VP2 and VP3 are located at the quasi-sixfold axes. The naked capsid interacts with the host receptor HAVCR1 to provide virion attachment to and probably entry into the target cell. In terms of biological role, VP0 precursor is a component of the immature procapsids. Its function is as follows. Plays a role in the assembly of the 12 pentamers into an icosahedral structure. Has not been detected in mature virions, supposedly owing to its small size. Functionally, precursor component of immature procapsids that corresponds to an extended form of the structural protein VP1. After maturation, possibly by the host Cathepsin L, the assembly signal 2A is cleaved to give rise to the mature VP1 protein. Functions as a viroporin. Affects membrane integrity and causes an increase in membrane permeability. Involved in host intracellular membrane rearrangements probably to give rise to the viral factories. Does not disrupt calcium homeostasis or glycoprotein trafficking. Antagonizes the innate immune response of the host by suppressing IFN-beta synthesis, which it achieves by interfering with the RIG-I/IFIH1 pathway. In terms of biological role, affects membrane integrity and causes an increase in membrane permeability. Its function is as follows. Associates with and induces structural rearrangements of intracellular membranes. Displays RNA-binding activity. Functionally, the precursor 3ABC is targeted to the mitochondrial membrane where protease 3C activity cleaves and inhibits the host antiviral protein MAVS, thereby disrupting activation of IRF3 through the IFIH1/MDA5 pathway. In vivo, the protease activity of 3ABC precursor is more efficient in cleaving the 2BC precursor than that of protein 3C. The 3ABC precursor may therefore play a role in the proteolytic processing of the polyprotein. Possible viroporin. Interacts with the 3CD precursor and with RNA structures found at both the 5'- and 3'-termini of the viral genome. Since the 3AB precursor contains the hydrophobic domain 3A, it probably anchors the whole viral replicase complex to intracellular membranes on which viral RNA synthesis occurs. In terms of biological role, may serve as membrane anchor to the 3AB and 3ABC precursors via its hydrophobic domain. May interact with RNA. Its function is as follows. Acts as a primer for viral RNA replication and remains covalently bound to viral genomic RNA. VPg is uridylylated prior to priming replication into VPg-pUpU. The VPg-pUpU is then used as primer on the genomic RNA poly(A) by the RNA-dependent RNA polymerase to replicate the viral genome. Functionally, cysteine protease that generates mature viral proteins from the precursor polyprotein. In addition to its proteolytic activity, it binds to viral RNA, and thus influences viral genome replication. RNA and substrate bind cooperatively to the protease. Cleaves IKBKG/NEMO to impair innate immune signaling. Cleaves host PABPC1 which may participate in the switch of viral translation to RNA synthesis. Interacts with the 3AB precursor and with RNA structures found at both the 5'- and 3'-termini of the viral genome. Disrupts TLR3 signaling by degrading the host adapter protein TICAM1/TRIF. In terms of biological role, RNA-directed RNA polymerase 3D-POL replicates genomic and antigenomic RNA by recognizing replications specific signals. The sequence is that of Genome polyprotein from Human hepatitis A virus genotype IA (isolate H2) (HHAV).